The primary structure comprises 337 residues: Casein kinase I isoform alpha (337 aa).

Residues 20-288 (YRVIRKIGSG…YLRQLFRILF (269 aa)) form the Protein kinase domain. Residues 26–34 (IGSGSFGDI) and Lys-49 each bind ATP. The active-site Proton acceptor is the Asp-139.

The protein belongs to the protein kinase superfamily. CK1 Ser/Thr protein kinase family. Casein kinase I subfamily. Interacts with cos. Requires Mg(2+) as cofactor. Phosphorylated. The dephosphorylated kinase is active in the cytoplasm while the active kinase in the nucleus is phosphorylated.

The protein resides in the cytoplasm. It localises to the nucleus. The enzyme catalyses L-seryl-[protein] + ATP = O-phospho-L-seryl-[protein] + ADP + H(+). The catalysed reaction is L-threonyl-[protein] + ATP = O-phospho-L-threonyl-[protein] + ADP + H(+). Activity increases following DNA damage. Casein kinases are operationally defined by their preferential utilization of acidic proteins such as caseins as substrates. Can phosphorylate a large number of proteins. Negative regulator of wg signaling. Phosphorylates arm directly or indirectly and stimulates its degradation which prevents inappropriate wg signaling. Phosphorylates smo which promotes its accumulation at the cell surface and its signaling activity in response to hh. Together with dco, regulates proteolytic processing of ci by phosphorylating it, which promotes its binding to slmb, the F-box recognition component of the SCF(slmb) E3 ubiquitin-protein ligase required for ci processing. Inhibits condensin II interphase activity by promoting degradation of the Cap-H2 regulatory subunit and limiting the levels of chromatin-bound Cap-H2 which regulates interphase chromosome organization. The protein is Casein kinase I isoform alpha (CkIalpha) of Drosophila melanogaster (Fruit fly).